A 250-amino-acid chain; its full sequence is Hydroxyethylthiazole kinase (250 aa).

Met-39 contacts substrate. ATP-binding residues include Arg-114 and Thr-159. Gly-186 provides a ligand contact to substrate.

It belongs to the Thz kinase family. Mg(2+) is required as a cofactor.

It carries out the reaction 5-(2-hydroxyethyl)-4-methylthiazole + ATP = 4-methyl-5-(2-phosphooxyethyl)-thiazole + ADP + H(+). Its pathway is cofactor biosynthesis; thiamine diphosphate biosynthesis; 4-methyl-5-(2-phosphoethyl)-thiazole from 5-(2-hydroxyethyl)-4-methylthiazole: step 1/1. In terms of biological role, catalyzes the phosphorylation of the hydroxyl group of 4-methyl-5-beta-hydroxyethylthiazole (THZ). The chain is Hydroxyethylthiazole kinase from Lactococcus lactis subsp. cremoris (strain MG1363).